Here is a 203-residue protein sequence, read N- to C-terminus: ATP-dependent Clp protease proteolytic subunit 2 (203 aa).

Catalysis depends on S98, which acts as the Nucleophile. H123 is a catalytic residue.

Belongs to the peptidase S14 family. As to quaternary structure, fourteen ClpP subunits assemble into 2 heptameric rings which stack back to back to give a disk-like structure with a central cavity, resembling the structure of eukaryotic proteasomes.

The protein localises to the cytoplasm. It carries out the reaction Hydrolysis of proteins to small peptides in the presence of ATP and magnesium. alpha-casein is the usual test substrate. In the absence of ATP, only oligopeptides shorter than five residues are hydrolyzed (such as succinyl-Leu-Tyr-|-NHMec, and Leu-Tyr-Leu-|-Tyr-Trp, in which cleavage of the -Tyr-|-Leu- and -Tyr-|-Trp bonds also occurs).. Cleaves peptides in various proteins in a process that requires ATP hydrolysis. Has a chymotrypsin-like activity. Plays a major role in the degradation of misfolded proteins. The polypeptide is ATP-dependent Clp protease proteolytic subunit 2 (Chlamydia trachomatis serovar A (strain ATCC VR-571B / DSM 19440 / HAR-13)).